Consider the following 292-residue polypeptide: Acetyl-coenzyme A carboxylase carboxyl transferase subunit beta (292 aa).

The 270-residue stretch at Val-23 to Glu-292 folds into the CoA carboxyltransferase N-terminal domain. Zn(2+) contacts are provided by Cys-27, Cys-30, Cys-46, and Cys-49. Residues Cys-27–Cys-49 form a C4-type zinc finger.

Belongs to the AccD/PCCB family. Acetyl-CoA carboxylase is a heterohexamer composed of biotin carboxyl carrier protein (AccB), biotin carboxylase (AccC) and two subunits each of ACCase subunit alpha (AccA) and ACCase subunit beta (AccD). The cofactor is Zn(2+).

The protein resides in the cytoplasm. The catalysed reaction is N(6)-carboxybiotinyl-L-lysyl-[protein] + acetyl-CoA = N(6)-biotinyl-L-lysyl-[protein] + malonyl-CoA. Its pathway is lipid metabolism; malonyl-CoA biosynthesis; malonyl-CoA from acetyl-CoA: step 1/1. Functionally, component of the acetyl coenzyme A carboxylase (ACC) complex. Biotin carboxylase (BC) catalyzes the carboxylation of biotin on its carrier protein (BCCP) and then the CO(2) group is transferred by the transcarboxylase to acetyl-CoA to form malonyl-CoA. The protein is Acetyl-coenzyme A carboxylase carboxyl transferase subunit beta of Idiomarina loihiensis (strain ATCC BAA-735 / DSM 15497 / L2-TR).